Here is a 301-residue protein sequence, read N- to C-terminus: uncharacterized protein (301 aa).

Positions 16–28 (EITEESEKTKTDL) are enriched in basic and acidic residues. The tract at residues 16-38 (EITEESEKTKTDLQKANTPNKTE) is disordered. Residues 29 to 38 (QKANTPNKTE) show a composition bias toward polar residues. In terms of domain architecture, G-patch spans 252–301 (KENVALKMLQRCGWKEGQGLGQHNQGIINPLHVEISGFVTETKHSKINDK).

This is an uncharacterized protein from Schizosaccharomyces pombe (strain 972 / ATCC 24843) (Fission yeast).